A 93-amino-acid polypeptide reads, in one-letter code: MSRSIKKGPFADASLLKKVDAQADADKKQVIKTWSRRSTIFPSFVGLTIAVYDGRKHVPVYITEDMVGHKLGEFVPTRTFHGHKSTEDKTTAK.

The protein belongs to the universal ribosomal protein uS19 family.

In terms of biological role, protein S19 forms a complex with S13 that binds strongly to the 16S ribosomal RNA. In Lactobacillus helveticus (strain DPC 4571), this protein is Small ribosomal subunit protein uS19.